A 145-amino-acid polypeptide reads, in one-letter code: MSQTILSTETIKVKAEARSKEEAIKAAGTLLVEKGYVEPNYVDKMFERETVTSTYLGNYLAIPHGTEEAKEQVIHSGMSVLVFDDPVDWDGQEVRVVIGIAGKGTEHLDILSKIAITFSEEENVERLLSLESAQEVLAFLGEVNE.

Residues 4-143 (TILSTETIKV…QEVLAFLGEV (140 aa)) form the PTS EIIA type-2 domain. The active-site Tele-phosphohistidine intermediate is the His64. The residue at position 64 (His64) is a Phosphohistidine; by HPr.

Its subcellular location is the cytoplasm. The phosphoenolpyruvate-dependent sugar phosphotransferase system (sugar PTS), a major carbohydrate active transport system, catalyzes the phosphorylation of incoming sugar substrates concomitantly with their translocation across the cell membrane. The enzyme II CmtAB PTS system is involved in D-mannitol transport. This is Mannitol-specific phosphotransferase enzyme IIA component (mtlF) from Halalkalibacterium halodurans (strain ATCC BAA-125 / DSM 18197 / FERM 7344 / JCM 9153 / C-125) (Bacillus halodurans).